Here is a 600-residue protein sequence, read N- to C-terminus: Methionine--tRNA ligase (600 aa).

The short motif at 12–22 (PYANGPRHIGH) is the 'HIGH' region element. Zn(2+) contacts are provided by cysteine 144, cysteine 147, cysteine 157, and cysteine 160. The short motif at 351–355 (KFSSS) is the 'KMSKS' region element. Residue serine 354 coordinates ATP.

The protein belongs to the class-I aminoacyl-tRNA synthetase family. MetG type 1 subfamily. In terms of assembly, monomer. Zn(2+) is required as a cofactor.

Its subcellular location is the cytoplasm. It catalyses the reaction tRNA(Met) + L-methionine + ATP = L-methionyl-tRNA(Met) + AMP + diphosphate. Its function is as follows. Is required not only for elongation of protein synthesis but also for the initiation of all mRNA translation through initiator tRNA(fMet) aminoacylation. The protein is Methionine--tRNA ligase of Chloroflexus aurantiacus (strain ATCC 29364 / DSM 637 / Y-400-fl).